Reading from the N-terminus, the 134-residue chain is Large ribosomal subunit protein uL16c (134 aa).

It belongs to the universal ribosomal protein uL16 family. Part of the 50S ribosomal subunit.

It is found in the plastid. The protein localises to the chloroplast. In Guillardia theta (Cryptophyte), this protein is Large ribosomal subunit protein uL16c.